We begin with the raw amino-acid sequence, 108 residues long: Protein S100-A15A (108 aa).

Positions 53–88 constitute an EF-hand domain; that stretch reads KEPYYITELFQAADKNKDNQICFDEFLYILGKLVKD. Positions 66, 68, 70, 72, and 77 each coordinate Ca(2+).

The protein belongs to the S-100 family.

The chain is Protein S100-A15A (S100A15A) from Pongo abelii (Sumatran orangutan).